We begin with the raw amino-acid sequence, 121 residues long: Autophagy-related protein 8f (121 aa).

Gly-117 is lipidated: Phosphatidylethanolamine amidated glycine. Positions 118-121 (FGSP) are cleaved as a propeptide — removed in mature form.

This sequence belongs to the ATG8 family. In terms of assembly, interacts with ATG4. Interacts with NBR1. Interacts with ATI1 and ATI2. Interacts with SH3P2. In terms of processing, the C-terminal 4 residues are removed by ATG4 to expose Gly-117 at the C-terminus. This Gly-117 forms then a thioester bond with the 'Cys-558' of ATG7 (E1-like activating enzyme) before being transferred to the 'Cys-258' of ATG3 (the specific E2 conjugating enzyme), in order to be finally amidated with phosphatidylethanolamine. This lipid modification anchors ATG8 to autophagosomes. In terms of tissue distribution, constitutively expressed.

The protein localises to the cytoplasmic vesicle. It localises to the autophagosome membrane. The protein resides in the vacuole membrane. Its subcellular location is the cytoplasm. It is found in the cytoskeleton. In terms of biological role, ubiquitin-like modifier involved in autophagosomes formation. May mediate the delivery of the autophagosomes to the vacuole via the microtubule cytoskeleton. The chain is Autophagy-related protein 8f (ATG8F) from Arabidopsis thaliana (Mouse-ear cress).